Here is a 95-residue protein sequence, read N- to C-terminus: Glutamine synthetase and cystathionine beta-lyase binding protein (95 aa).

Interacts with glutamine synthetase (TTHA1329) and cystathionine beta-lyase (TTHA1620), but proteins do not form a ternary complex.

Functionally, binds to glutamine synthetase and cystathionine beta-lyase. May be utilized for the efficient use of nitrogen in the global nitrogen regulation of T.thermophilus. This chain is Glutamine synthetase and cystathionine beta-lyase binding protein, found in Thermus thermophilus (strain ATCC 27634 / DSM 579 / HB8).